The sequence spans 94 residues: Small ribosomal subunit protein uS19 (94 aa).

Residues 75-94 (SHTRTFKGHAGDKKAAGSKR) are disordered. Positions 83–94 (HAGDKKAAGSKR) are enriched in basic and acidic residues.

Belongs to the universal ribosomal protein uS19 family.

Functionally, protein S19 forms a complex with S13 that binds strongly to the 16S ribosomal RNA. The chain is Small ribosomal subunit protein uS19 from Nitrosomonas europaea (strain ATCC 19718 / CIP 103999 / KCTC 2705 / NBRC 14298).